The sequence spans 747 residues: MLCSNRQSSLDFQDLLFFLLLCIWLFTPLASCVLQAAGNDTYPKWPTRWDPLFYRVLQCSAPFWGFVADRFKKGKAVLLFSVLCWVVFNCGIGFVKPAAMSCVSVDPTVQSPVNFTNYTHAGNHTRQRRYLTEDAYANPPLSQPILAAYRPHSRYIRSANTNTTSAPFRNSTVDISMASNLTTMSPSATKVPLKSTSTMETQAITAKVKQYIIIFNKEQVDTIFLLILLVIIIGEFFSAPAVTIVDTVTLQYLGQNRDRYGLQRMWGSLGWGIAMLSVGIWIDNTHITIFIQGLGCVLPDYKNYQIAFIVFGVLMTSALIVATQFHFDNRAYQSDEEEDKKEDVEIPQVIQEVSSPESSSDDAPVCPETNPQHFPFKDLFRIICGVRYGTVLFVAWFMGFGYGFVFTFLFWHLEDLKGTTTLFGICSVLSHISELAAYFISHKLIELVGHIRVLYIGLACNTARYLYISYLENAWIVLPMEVLQGLTHASVWAACISYLSAAVPPALRTSAQGILQGLHLGLGRGCGAMLGGVFVNFFGAAETFRGLGMASLVTLLIFSLIQWLLGQNEEKKGAMLAENIPVPSSPVPIATIDLVQNQSTSQPNSDSKSRKTRHQEEQEDPNKPAWVVSASPWVTIAFALYQIRDMVAQTKNNDCQGQQERSEQQTSAAPPGDESTSSQPNASSSPVEYAFQGPASSAFVPQNTHPVRPVAEPPSSTEAKEPVENSTPLPGHSKPLPAITQTQPTTH.

Transmembrane regions (helical) follow at residues Leu-15–Gln-35, Lys-75–Val-95, Thr-222–Val-242, Trp-271–Ile-291, Ile-306–His-326, Val-391–Trp-411, Thr-420–Ile-440, Val-453–Tyr-470, Gly-485–Leu-507, Leu-520–Ala-540, and Gly-546–Gly-566. Composition is skewed to polar residues over residues Asn-597–Asp-606 and Asn-652–Ala-668. Disordered regions lie at residues Asn-597 to Ala-625 and Asn-652 to His-747. Over residues Ser-675–Ser-685 the composition is skewed to low complexity.

The protein belongs to the major facilitator superfamily. MFSD6 family.

It localises to the membrane. The polypeptide is Major facilitator superfamily domain-containing protein 6-B (mfsd6b) (Danio rerio (Zebrafish)).